Consider the following 152-residue polypeptide: Transcriptional repressor NrdR (152 aa).

A zinc finger lies at 3–34; the sequence is CPFCNHGELKVIDSRNAPEANAIKRRRECLKC. The region spanning 48–138 is the ATP-cone domain; that stretch reads LQVLKRDGRY…VYRRFKDVGE (91 aa).

This sequence belongs to the NrdR family. Zn(2+) is required as a cofactor.

Its function is as follows. Negatively regulates transcription of bacterial ribonucleotide reductase nrd genes and operons by binding to NrdR-boxes. This chain is Transcriptional repressor NrdR, found in Chlamydia pneumoniae (Chlamydophila pneumoniae).